The following is a 438-amino-acid chain: Prenyltransferase malE (438 aa).

Glu92 serves as a coordination point for substrate. Dimethylallyl diphosphate-binding residues include Arg106, Lys192, Tyr194, Lys259, Tyr261, Tyr346, and Tyr411.

Belongs to the tryptophan dimethylallyltransferase family.

It carries out the reaction (S)-3-(indol-3-ylmethyl)-6,7,8,8a-tetrahydropyrrolo[1,2-a]pyrazin-1-one + dimethylallyl diphosphate = (S)-3-{[2-(1,1-dimethylallyl)-indol-3-yl]methyl}-6,7,8,8a-tetrahydropyrrolo[1,2-a]pyrazin-1-one + diphosphate. It catalyses the reaction 1-hydroxy-3-(indol-3-ylmethyl)-6H,7H,8H-5lambda(5)-pyrrolo[1,2-a]pyrazine + dimethylallyl diphosphate = 1-hydroxy-3-{[2-(1,1-dimethylallyl)-indol-3-yl]methyl}-6H,7H,8H-5lambda(5)-pyrrolo[1,2-a]pyrazine + diphosphate. The protein operates within alkaloid biosynthesis. Functionally, prenyltransferase; part of the gene cluster that mediates the biosynthesis of malbrancheamide, a dichlorinated fungal indole alkaloid that belongs to a family of natural products containing a characteristic bicyclo[2.2.2]diazaoctane core. The first step of malbrancheamide biosynthesis involves coupling of L-proline and L-tryptophan by malG, a bimodular NRPS, to produce L-Pro-L-Trp aldehyde through reductive offloading. This compound undergoes spontaneous cyclization and dehydration to give a dienamine which is reverse prenylated at C-2 by malE. The other prenyltransferase present in the cluster, malB, displays modest activity, suggesting that may be a redundant gene in the pathway. Subsequently, a [4+2] Diels-Alder cyclo-addition catalyzed by the bifunctional enzyme malC forms the characteristic bicyclo[2.2.2]diazaoctane ring of premalbrancheamid. Finally, the flavin-dependent halogenase malA catalyzes the iterative dichlorination of the indole ring of premalbrancheamide to yield C-9 monochlorinated malbrancheamide B, C-8 monochlorinated isomalbrancheamide B, and dichlorinated malbrancheamide. MalA is also able to brominate premalbrancheamide at C-9 to yield malbrancheamide C, and, to a lesser extend, at C-8 to yield isomalbrancheamide C. Finally, malA can brominate C-9 monochlorinated malbrancheamide B at C-8 to yield malbrancheamide D, or C-8 monochlorinated isomalbrancheamide B at C-9 to produce isomalbrancheamide D. The polypeptide is Prenyltransferase malE (Malbranchea aurantiaca).